The primary structure comprises 56 residues: Ferredoxin (56 aa).

2 4Fe-4S ferredoxin-type domains span residues 2-28 and 29-56; these read AYKI…SQGD and SIFV…PVQE. The [4Fe-4S] cluster site is built by Cys9, Cys12, Cys15, Cys19, Cys38, Cys41, Cys44, and Cys48.

It depends on [4Fe-4S] cluster as a cofactor.

Functionally, ferredoxins are iron-sulfur proteins that transfer electrons in a wide variety of metabolic reactions. The sequence is that of Ferredoxin from Clostridium pasteurianum.